A 287-amino-acid polypeptide reads, in one-letter code: Phosphatidylserine decarboxylase proenzyme (287 aa).

Catalysis depends on charge relay system; for autoendoproteolytic cleavage activity residues aspartate 89, histidine 146, and serine 252. Residue serine 252 is the Schiff-base intermediate with substrate; via pyruvic acid; for decarboxylase activity of the active site. A Pyruvic acid (Ser); by autocatalysis modification is found at serine 252.

The protein belongs to the phosphatidylserine decarboxylase family. PSD-B subfamily. Prokaryotic type I sub-subfamily. In terms of assembly, heterodimer of a large membrane-associated beta subunit and a small pyruvoyl-containing alpha subunit. Pyruvate is required as a cofactor. Post-translationally, is synthesized initially as an inactive proenzyme. Formation of the active enzyme involves a self-maturation process in which the active site pyruvoyl group is generated from an internal serine residue via an autocatalytic post-translational modification. Two non-identical subunits are generated from the proenzyme in this reaction, and the pyruvate is formed at the N-terminus of the alpha chain, which is derived from the carboxyl end of the proenzyme. The autoendoproteolytic cleavage occurs by a canonical serine protease mechanism, in which the side chain hydroxyl group of the serine supplies its oxygen atom to form the C-terminus of the beta chain, while the remainder of the serine residue undergoes an oxidative deamination to produce ammonia and the pyruvoyl prosthetic group on the alpha chain. During this reaction, the Ser that is part of the protease active site of the proenzyme becomes the pyruvoyl prosthetic group, which constitutes an essential element of the active site of the mature decarboxylase.

The protein resides in the cell membrane. It catalyses the reaction a 1,2-diacyl-sn-glycero-3-phospho-L-serine + H(+) = a 1,2-diacyl-sn-glycero-3-phosphoethanolamine + CO2. It participates in phospholipid metabolism; phosphatidylethanolamine biosynthesis; phosphatidylethanolamine from CDP-diacylglycerol: step 2/2. In terms of biological role, catalyzes the formation of phosphatidylethanolamine (PtdEtn) from phosphatidylserine (PtdSer). The polypeptide is Phosphatidylserine decarboxylase proenzyme (Shewanella woodyi (strain ATCC 51908 / MS32)).